Consider the following 274-residue polypeptide: Rhamnulose-1-phosphate aldolase (274 aa).

The active site involves Glu117. Positions 141, 143, and 212 each coordinate Zn(2+).

The protein belongs to the aldolase class II family. RhaD subfamily. As to quaternary structure, homotetramer. Zn(2+) serves as cofactor.

Its subcellular location is the cytoplasm. The enzyme catalyses L-rhamnulose 1-phosphate = (S)-lactaldehyde + dihydroxyacetone phosphate. Its pathway is carbohydrate degradation; L-rhamnose degradation; glycerone phosphate from L-rhamnose: step 3/3. Functionally, catalyzes the reversible cleavage of L-rhamnulose-1-phosphate to dihydroxyacetone phosphate (DHAP) and L-lactaldehyde. This chain is Rhamnulose-1-phosphate aldolase, found in Escherichia coli (strain SMS-3-5 / SECEC).